Here is a 443-residue protein sequence, read N- to C-terminus: FLYWCH-type zinc finger-containing protein peb-1 (443 aa).

The disordered stretch occupies residues 22 to 49 (KPGSSDISSSSTDTSAISPISVSSMPLS). A compositionally biased stretch (low complexity) spans 25–42 (SSDISSSSTDTSAISPIS). A DNA-binding region (required for DNA-binding) is located at residues 46-203 (MPLSPDKEKK…RNKDGKPKKP (158 aa)). Residues 69–135 (IVTSFKGYQK…NACTKGSHNH (67 aa)) form an FLYWCH-type zinc finger. Residues 251–271 (PTIQIPQPIPTPIQHQQQEQS) form a disordered region.

It localises to the nucleus. Functionally, putative transcription factor. Binds to specific sequence motif 5'-[TC][AGT]TGCC[GA][AT]-3' in regulatory elements of target genes such as myosin myo-2. May modulate gene expression, perhaps acting in opposition to transcription factor pha-4. Involved in morphogenesis, perhaps especially in formation of the pharynx. Plays roles in molting, feeding and morphology. In Caenorhabditis elegans, this protein is FLYWCH-type zinc finger-containing protein peb-1.